We begin with the raw amino-acid sequence, 161 residues long: Nucleotide-binding protein Geob_0921 (161 aa).

Belongs to the YajQ family.

Its function is as follows. Nucleotide-binding protein. The chain is Nucleotide-binding protein Geob_0921 from Geotalea daltonii (strain DSM 22248 / JCM 15807 / FRC-32) (Geobacter daltonii).